The chain runs to 300 residues: 4-hydroxy-tetrahydrodipicolinate synthase (300 aa).

T56 serves as a coordination point for pyruvate. Y145 functions as the Proton donor/acceptor in the catalytic mechanism. K173 serves as the catalytic Schiff-base intermediate with substrate. V215 is a pyruvate binding site.

The protein belongs to the DapA family. As to quaternary structure, homotetramer; dimer of dimers.

Its subcellular location is the cytoplasm. The catalysed reaction is L-aspartate 4-semialdehyde + pyruvate = (2S,4S)-4-hydroxy-2,3,4,5-tetrahydrodipicolinate + H2O + H(+). Its pathway is amino-acid biosynthesis; L-lysine biosynthesis via DAP pathway; (S)-tetrahydrodipicolinate from L-aspartate: step 3/4. In terms of biological role, catalyzes the condensation of (S)-aspartate-beta-semialdehyde [(S)-ASA] and pyruvate to 4-hydroxy-tetrahydrodipicolinate (HTPA). The protein is 4-hydroxy-tetrahydrodipicolinate synthase of Prochlorococcus marinus (strain MIT 9301).